Here is a 388-residue protein sequence, read N- to C-terminus: Norsolorinic acid reductase A (388 aa).

Position 69 (Asp69) interacts with NADP(+). The Proton donor role is filled by Tyr74. His148 serves as a coordination point for substrate. NADP(+) is bound by residues 178 to 179 (SD), Gln204, 233 to 243 (GVLGRGQFRSA), and 300 to 308 (RKVEHLKEN).

This sequence belongs to the aldo/keto reductase family. Aldo/keto reductase 2 subfamily.

Its pathway is mycotoxin biosynthesis; aflatoxin biosynthesis. Functionally, norsolorinic acid reductase; part of the gene cluster that mediates the biosynthesis of aflatoxins, a group of polyketide-derived furanocoumarins, and part of the most toxic and carcinogenic compounds among the known mycotoxins. The four major aflatoxins produced by A.parasiticus are aflatoxin B1 (AFB1), aflatoxin B2 (AFB2), aflatoxin G1 (AFG1) and aflatoxin G2 (AFG2). Within the aflatoxin pathway, the norsolorinic acid reductase aflE may play a role in the conversion of norsolorinic acid (NOR) to averantin (AVN). The biosynthesis of aflatoxins begins with the norsolorinic acid synthase aflC that combines a hexanoyl starter unit produced by the fatty acid synthase aflA/aflB and 7 malonyl-CoA extender units to synthesize the precursor NOR. The second step is the conversion of NOR to averantin and requires the norsolorinic acid ketoreductase aflD, which catalyzes the dehydration of norsolorinic acid to form (1'S)-averantin. The norsolorinic acid reductases aflE and aflF may also play a role in the conversion of NOR to AVN. The cytochrome P450 monooxygenase aflG then catalyzes the hydroxylation of AVN to 5'hydroxyaverantin (HAVN). The next step is performed by the 5'-hydroxyaverantin dehydrogenase aflH that transforms HAVN to 5'-oxoaverantin (OAVN) which is further converted to averufin (AVF) by aflK that plays a dual role in the pathway, as a 5'-oxoaverantin cyclase that mediates conversion of 5'-oxoaverantin, as well as a versicolorin B synthase in a later step in the pathway. The averufin oxidase aflI catalyzes the conversion of AVF to versiconal hemiacetal acetate (VHA). VHA is then the substrate for the versiconal hemiacetal acetate esterase aflJ to yield versiconal (VAL). Versicolorin B synthase aflK then converts VAL to versicolorin B (VERB) by closing the bisfuran ring of aflatoxin which is required for DNA-binding, thus giving to aflatoxin its activity as a mutagen. Then, the activity of the versicolorin B desaturase aflL leads to versicolorin A (VERA). A branch point starts from VERB since it can also be converted to dihydrodemethylsterigmatocystin (DMDHST), probably also by aflL, VERA being a precursor for aflatoxins B1 and G1, and DMDHST for aflatoxins B2 and G2. Next, the versicolorin reductase aflM and the cytochrome P450 monooxygenase aflN are involved in conversion of VERA to demethylsterigmatocystin (DMST). AflX and aflY seem also involved in this step, through probable aflX-mediated epoxide ring-opening step following versicolorin A oxidation and aflY-mediated Baeyer-Villiger oxidation required for the formation of the xanthone ring. The methyltransferase aflO then leads to the modification of DMST to sterigmatocystin (ST), and of DMDHST to dihydrosterigmatocystin (DHST). Both ST and DHST are then substrates of the O-methyltransferase aflP to yield O-methylsterigmatocystin (OMST) and dihydro-O-methylsterigmatocystin (DHOMST), respectively. Finally OMST is converted to aflatoxins B1 and G1, and DHOMST to aflatoxins B2 and G2, via the action of several enzymes including O-methylsterigmatocystin oxidoreductase aflQ, the cytochrome P450 monooxygenase aflU, but also the NADH-dependent flavin oxidoreductase nadA which is specifically required for the synthesis of AFG1. The polypeptide is Norsolorinic acid reductase A (Aspergillus parasiticus (strain ATCC 56775 / NRRL 5862 / SRRC 143 / SU-1)).